The following is a 990-amino-acid chain: Translation initiation factor IF-2 (990 aa).

The tract at residues 92-402 (KKRTFVKRDD…QRDEHLQAAP (311 aa)) is disordered. Composition is skewed to low complexity over residues 104 to 116 (EGAA…AAFA) and 131 to 151 (EAPA…AAPA). Residues 158-201 (ELARREEQARHQAELIRRQEAELAAKRAAREAREKREREAEERA) show a composition bias toward basic and acidic residues. Over residues 223–243 (TREQAAEATARNAAQLQARAK) the composition is skewed to low complexity. Positions 244–264 (AAAESKARSDEEAARAADLDA) are enriched in basic and acidic residues. Low complexity-rich tracts occupy residues 281-290 (ATPKKAVMVA) and 318-342 (PAVG…PGAG). Basic and acidic residues-rich tracts occupy residues 358 to 368 (PAKKKEIKTRG) and 386 to 398 (RRGD…DEHL). Positions 490 to 659 (PRAPVVTVMG…LLQADVMELK (170 aa)) constitute a tr-type G domain. The tract at residues 499–506 (GHVDHGKT) is G1. 499–506 (GHVDHGKT) is a binding site for GTP. The interval 524–528 (GITQH) is G2. Residues 545–548 (DTPG) are G3. Residues 545 to 549 (DTPGH) and 599 to 602 (TKAD) contribute to the GTP site. Residues 599–602 (TKAD) are G4. A G5 region spans residues 635–637 (SSK).

This sequence belongs to the TRAFAC class translation factor GTPase superfamily. Classic translation factor GTPase family. IF-2 subfamily.

Its subcellular location is the cytoplasm. Its function is as follows. One of the essential components for the initiation of protein synthesis. Protects formylmethionyl-tRNA from spontaneous hydrolysis and promotes its binding to the 30S ribosomal subunits. Also involved in the hydrolysis of GTP during the formation of the 70S ribosomal complex. This is Translation initiation factor IF-2 from Verminephrobacter eiseniae (strain EF01-2).